Here is a 396-residue protein sequence, read N- to C-terminus: 1-deoxy-D-xylulose 5-phosphate reductoisomerase (396 aa).

Residues T15, G16, S17, I18, G41, and N129 each contribute to the NADPH site. K130 contributes to the 1-deoxy-D-xylulose 5-phosphate binding site. E131 serves as a coordination point for NADPH. Position 155 (D155) interacts with Mn(2+). 1-deoxy-D-xylulose 5-phosphate contacts are provided by S156, E157, S182, and H205. Residue E157 participates in Mn(2+) binding. G211 contributes to the NADPH binding site. Positions 218, 223, 224, and 227 each coordinate 1-deoxy-D-xylulose 5-phosphate. E227 serves as a coordination point for Mn(2+).

The protein belongs to the DXR family. Requires Mg(2+) as cofactor. It depends on Mn(2+) as a cofactor.

It catalyses the reaction 2-C-methyl-D-erythritol 4-phosphate + NADP(+) = 1-deoxy-D-xylulose 5-phosphate + NADPH + H(+). Its pathway is isoprenoid biosynthesis; isopentenyl diphosphate biosynthesis via DXP pathway; isopentenyl diphosphate from 1-deoxy-D-xylulose 5-phosphate: step 1/6. Functionally, catalyzes the NADPH-dependent rearrangement and reduction of 1-deoxy-D-xylulose-5-phosphate (DXP) to 2-C-methyl-D-erythritol 4-phosphate (MEP). The polypeptide is 1-deoxy-D-xylulose 5-phosphate reductoisomerase (Xanthomonas oryzae pv. oryzae (strain MAFF 311018)).